The primary structure comprises 283 residues: MKKVGVIPNINKDKDLEVTKSVVKWLLEHDSEPYLNEIVASKMGYDEYGKKSTDIYSKSDFIIALGGDGTILNVARLCAPFGTPIFAVNLGHLGFLTEVDMNEVFVSLDKIYKGEYTVEKRMMLEANVVKNDMEIINFRALNDIVITRGAFSRMARINAYVNNNYVDTYLADGVIIATPTGSTAYSLSAGGPIVYPTVEVIIITPICPHTLYSRSIIVSPDDVIRLEISEENQDLMITTDGQQGYKLDYRDIIYIKKSNEYTNLIRVKNTNFFDLLRDKLTER.

The active-site Proton acceptor is Asp68. Residues Asp68 to Gly69, Asn142 to Asp143, Arg153, Asp172, Thr183 to Ser188, and Gln242 each bind NAD(+).

It belongs to the NAD kinase family. It depends on a divalent metal cation as a cofactor.

It is found in the cytoplasm. The enzyme catalyses NAD(+) + ATP = ADP + NADP(+) + H(+). Involved in the regulation of the intracellular balance of NAD and NADP, and is a key enzyme in the biosynthesis of NADP. Catalyzes specifically the phosphorylation on 2'-hydroxyl of the adenosine moiety of NAD to yield NADP. The sequence is that of NAD kinase from Thermoanaerobacter pseudethanolicus (strain ATCC 33223 / 39E) (Clostridium thermohydrosulfuricum).